A 106-amino-acid polypeptide reads, in one-letter code: MGNILNQIGIENYIFLSVVLFCIGVFGVLYRRNSIIVFMSIEIMLNAVNLLFVAFSTYHQDAQGQVFVFFSMAVAAAEVAVGLAILVSIFRNIGSISIDNLKNLKG.

Helical transmembrane passes span 8 to 28 (IGIE…VFGV), 35 to 55 (IIVF…FVAF), and 66 to 86 (VFVF…LAIL).

The protein belongs to the complex I subunit 4L family. As to quaternary structure, NDH-1 is composed of 14 different subunits. Subunits NuoA, H, J, K, L, M, N constitute the membrane sector of the complex.

Its subcellular location is the cell inner membrane. The enzyme catalyses a quinone + NADH + 5 H(+)(in) = a quinol + NAD(+) + 4 H(+)(out). In terms of biological role, NDH-1 shuttles electrons from NADH, via FMN and iron-sulfur (Fe-S) centers, to quinones in the respiratory chain. The immediate electron acceptor for the enzyme in this species is believed to be a menaquinone. Couples the redox reaction to proton translocation (for every two electrons transferred, four hydrogen ions are translocated across the cytoplasmic membrane), and thus conserves the redox energy in a proton gradient. In Flavobacterium johnsoniae (strain ATCC 17061 / DSM 2064 / JCM 8514 / BCRC 14874 / CCUG 350202 / NBRC 14942 / NCIMB 11054 / UW101) (Cytophaga johnsonae), this protein is NADH-quinone oxidoreductase subunit K.